Consider the following 430-residue polypeptide: Dihydroorotase (430 aa).

Residues His60 and His62 each contribute to the Zn(2+) site. Residues His62–Arg64 and Asn94 contribute to the substrate site. Zn(2+) is bound by residues Asp151, His178, and His231. Residue Asn277 participates in substrate binding. Residue Asp304 coordinates Zn(2+). Asp304 is a catalytic residue. Residues His308 and Phe322–Gly323 contribute to the substrate site.

The protein belongs to the metallo-dependent hydrolases superfamily. DHOase family. Class I DHOase subfamily. The cofactor is Zn(2+).

The catalysed reaction is (S)-dihydroorotate + H2O = N-carbamoyl-L-aspartate + H(+). The protein operates within pyrimidine metabolism; UMP biosynthesis via de novo pathway; (S)-dihydroorotate from bicarbonate: step 3/3. Functionally, catalyzes the reversible cyclization of carbamoyl aspartate to dihydroorotate. This is Dihydroorotase from Carboxydothermus hydrogenoformans (strain ATCC BAA-161 / DSM 6008 / Z-2901).